We begin with the raw amino-acid sequence, 138 residues long: Small ribosomal subunit protein uS11c (138 aa).

Positions 1–23 (MAKPILRIGSRKNTRSSSRKNVR) are disordered. The span at 9–23 (GSRKNTRSSSRKNVR) shows a compositional bias: basic residues.

It belongs to the universal ribosomal protein uS11 family. As to quaternary structure, part of the 30S ribosomal subunit.

The protein localises to the plastid. It is found in the chloroplast. The chain is Small ribosomal subunit protein uS11c from Nasturtium officinale (Watercress).